The sequence spans 401 residues: Large ribosomal subunit protein uL4 (401 aa).

This sequence belongs to the universal ribosomal protein uL4 family.

The protein is Large ribosomal subunit protein uL4 (RpL4) of Drosophila melanogaster (Fruit fly).